We begin with the raw amino-acid sequence, 344 residues long: Phosphoribosylformylglycinamidine cyclo-ligase (344 aa).

The protein belongs to the AIR synthase family.

It is found in the cytoplasm. It catalyses the reaction 2-formamido-N(1)-(5-O-phospho-beta-D-ribosyl)acetamidine + ATP = 5-amino-1-(5-phospho-beta-D-ribosyl)imidazole + ADP + phosphate + H(+). It participates in purine metabolism; IMP biosynthesis via de novo pathway; 5-amino-1-(5-phospho-D-ribosyl)imidazole from N(2)-formyl-N(1)-(5-phospho-D-ribosyl)glycinamide: step 2/2. This is Phosphoribosylformylglycinamidine cyclo-ligase from Anaeromyxobacter sp. (strain Fw109-5).